We begin with the raw amino-acid sequence, 927 residues long: Bifunctional glutamine synthetase adenylyltransferase/adenylyl-removing enzyme (927 aa).

Positions 1–428 are adenylyl removase; the sequence is MTMTDASDLL…AQFDQVFADK (428 aa). The interval 438–927 is adenylyl transferase; the sequence is DQAAGCIWSG…AALWARVFGA (490 aa).

It belongs to the GlnE family. The cofactor is Mg(2+).

The catalysed reaction is [glutamine synthetase]-O(4)-(5'-adenylyl)-L-tyrosine + phosphate = [glutamine synthetase]-L-tyrosine + ADP. The enzyme catalyses [glutamine synthetase]-L-tyrosine + ATP = [glutamine synthetase]-O(4)-(5'-adenylyl)-L-tyrosine + diphosphate. Involved in the regulation of glutamine synthetase GlnA, a key enzyme in the process to assimilate ammonia. When cellular nitrogen levels are high, the C-terminal adenylyl transferase (AT) inactivates GlnA by covalent transfer of an adenylyl group from ATP to specific tyrosine residue of GlnA, thus reducing its activity. Conversely, when nitrogen levels are low, the N-terminal adenylyl removase (AR) activates GlnA by removing the adenylyl group by phosphorolysis, increasing its activity. The regulatory region of GlnE binds the signal transduction protein PII (GlnB) which indicates the nitrogen status of the cell. The protein is Bifunctional glutamine synthetase adenylyltransferase/adenylyl-removing enzyme of Burkholderia pseudomallei (strain K96243).